The chain runs to 360 residues: Histidinol-phosphate aminotransferase (360 aa).

Lys-218 is subject to N6-(pyridoxal phosphate)lysine.

The protein belongs to the class-II pyridoxal-phosphate-dependent aminotransferase family. Histidinol-phosphate aminotransferase subfamily. Homodimer. Requires pyridoxal 5'-phosphate as cofactor.

It catalyses the reaction L-histidinol phosphate + 2-oxoglutarate = 3-(imidazol-4-yl)-2-oxopropyl phosphate + L-glutamate. The protein operates within amino-acid biosynthesis; L-histidine biosynthesis; L-histidine from 5-phospho-alpha-D-ribose 1-diphosphate: step 7/9. The chain is Histidinol-phosphate aminotransferase from Pelagibacter ubique (strain HTCC1062).